A 226-amino-acid chain; its full sequence is V-type proton ATPase subunit E 2 (226 aa).

The protein belongs to the V-ATPase E subunit family. V-ATPase is a heteromultimeric enzyme made up of two complexes: the ATP-hydrolytic V1 complex and the proton translocation V0 complex. The V1 complex consists of three catalytic AB heterodimers that form a heterohexamer, three peripheral stalks each consisting of EG heterodimers, one central rotor including subunits D and F, and the regulatory subunits C and H. The proton translocation complex V0 consists of the proton transport subunit a, a ring of proteolipid subunits c9c'', rotary subunit d, subunits e and f, and the accessory subunits ATP6AP1/Ac45 and ATP6AP2/PRR. As to expression, testis specific.

Functionally, subunit of the V1 complex of vacuolar(H+)-ATPase (V-ATPase), a multisubunit enzyme composed of a peripheral complex (V1) that hydrolyzes ATP and a membrane integral complex (V0) that translocates protons. V-ATPase is responsible for acidifying and maintaining the pH of intracellular compartments and in some cell types, is targeted to the plasma membrane, where it is responsible for acidifying the extracellular environment. This is V-type proton ATPase subunit E 2 (ATP6V1E2) from Homo sapiens (Human).